Here is a 320-residue protein sequence, read N- to C-terminus: Cytochrome f (320 aa).

An N-terminal signal peptide occupies residues 1-35 (MQTRNTFSWIKEEITRSISVSLMIYIITGASISNA). Residues Tyr36, Cys56, Cys59, and His60 each coordinate heme. Residues 286–306 (VQGLLFFLASIVFAQIFLVLK) traverse the membrane as a helical segment.

Belongs to the cytochrome f family. The 4 large subunits of the cytochrome b6-f complex are cytochrome b6, subunit IV (17 kDa polypeptide, petD), cytochrome f and the Rieske protein, while the 4 small subunits are PetG, PetL, PetM and PetN. The complex functions as a dimer. It depends on heme as a cofactor.

The protein resides in the plastid. Its subcellular location is the chloroplast thylakoid membrane. Component of the cytochrome b6-f complex, which mediates electron transfer between photosystem II (PSII) and photosystem I (PSI), cyclic electron flow around PSI, and state transitions. The protein is Cytochrome f of Gossypium hirsutum (Upland cotton).